The chain runs to 308 residues: Ribonuclease HIII (308 aa).

Positions phenylalanine 88–glutamine 304 constitute an RNase H type-2 domain. Residues aspartate 94, glutamate 95, and aspartate 199 each contribute to the a divalent metal cation site.

The protein belongs to the RNase HII family. RnhC subfamily. The cofactor is Mn(2+). It depends on Mg(2+) as a cofactor.

The protein localises to the cytoplasm. It carries out the reaction Endonucleolytic cleavage to 5'-phosphomonoester.. In terms of biological role, endonuclease that specifically degrades the RNA of RNA-DNA hybrids. The sequence is that of Ribonuclease HIII from Staphylococcus epidermidis (strain ATCC 35984 / DSM 28319 / BCRC 17069 / CCUG 31568 / BM 3577 / RP62A).